The chain runs to 154 residues: Myoglobin (154 aa).

A Globin domain is found at 2–148 (GLSDGEWQLV…FRKDIAAKYK (147 aa)). S4 is subject to Phosphoserine. Residue H65 participates in nitrite binding. An O2-binding site is contributed by H65. Phosphothreonine is present on T68. Residue H94 participates in heme b binding.

The protein belongs to the globin family. As to quaternary structure, monomeric.

The protein localises to the cytoplasm. It localises to the sarcoplasm. It carries out the reaction Fe(III)-heme b-[protein] + nitric oxide + H2O = Fe(II)-heme b-[protein] + nitrite + 2 H(+). It catalyses the reaction H2O2 + AH2 = A + 2 H2O. Its function is as follows. Monomeric heme protein which primary function is to store oxygen and facilitate its diffusion within muscle tissues. Reversibly binds oxygen through a pentacoordinated heme iron and enables its timely and efficient release as needed during periods of heightened demand. Depending on the oxidative conditions of tissues and cells, and in addition to its ability to bind oxygen, it also has a nitrite reductase activity whereby it regulates the production of bioactive nitric oxide. Under stress conditions, like hypoxia and anoxia, it also protects cells against reactive oxygen species thanks to its pseudoperoxidase activity. This chain is Myoglobin (MB), found in Peponocephala electra (Melon-headed whale).